The chain runs to 148 residues: 3-dehydroquinate dehydratase (148 aa).

Tyrosine 23 functions as the Proton acceptor in the catalytic mechanism. Positions 74, 80, and 87 each coordinate substrate. The active-site Proton donor is the histidine 100. Substrate contacts are provided by residues 101-102 (IS) and arginine 111.

Belongs to the type-II 3-dehydroquinase family. In terms of assembly, homododecamer.

The catalysed reaction is 3-dehydroquinate = 3-dehydroshikimate + H2O. It participates in metabolic intermediate biosynthesis; chorismate biosynthesis; chorismate from D-erythrose 4-phosphate and phosphoenolpyruvate: step 3/7. In terms of biological role, catalyzes a trans-dehydration via an enolate intermediate. The chain is 3-dehydroquinate dehydratase from Anoxybacillus flavithermus (strain DSM 21510 / WK1).